Here is a 362-residue protein sequence, read N- to C-terminus: Glutaminase-asparaginase (362 aa).

A signal peptide spans 1–25; the sequence is MNAALKTFAPSALALLLILPSSASA. Residues 35–362 form the Asparaginase/glutaminase domain; the sequence is ANVVILATGG…KELQRIFWEY (328 aa). Thr-45 serves as the catalytic Acyl-ester intermediate. Substrate is bound by residues Ser-92 and 125-126; that span reads TD.

The protein belongs to the asparaginase 1 family. In terms of assembly, homotetramer.

The protein localises to the periplasm. The catalysed reaction is L-glutamine + H2O = L-glutamate + NH4(+). It catalyses the reaction L-asparagine + H2O = L-aspartate + NH4(+). In Pseudomonas putida (strain ATCC 47054 / DSM 6125 / CFBP 8728 / NCIMB 11950 / KT2440), this protein is Glutaminase-asparaginase (ansB).